The following is a 484-amino-acid chain: Adenylosuccinate synthetase, chloroplastic (484 aa).

The transit peptide at Met1–Ser44 directs the protein to the chloroplast. Residues Gly71 to Lys77 and Gly99 to Thr101 contribute to the GTP site. Asp72 functions as the Proton acceptor in the catalytic mechanism. Residues Asp72 and Gly99 each contribute to the Mg(2+) site. IMP is bound by residues Asp72–Lys75, Asn97–His100, Thr189, Arg203, Gln283, Thr298, and Arg362. Catalysis depends on His100, which acts as the Proton donor. A substrate-binding site is contributed by Thr358–Arg364. Residues Arg364, Lys390 to Asp392, and Gly473 to Gly475 each bind GTP.

The protein belongs to the adenylosuccinate synthetase family. In terms of assembly, homodimer. Requires Mg(2+) as cofactor.

It is found in the plastid. The protein localises to the chloroplast. It catalyses the reaction IMP + L-aspartate + GTP = N(6)-(1,2-dicarboxyethyl)-AMP + GDP + phosphate + 2 H(+). Its pathway is purine metabolism; AMP biosynthesis via de novo pathway; AMP from IMP: step 1/2. Functionally, plays an important role in the de novo pathway and in the salvage pathway of purine nucleotide biosynthesis. Catalyzes the first committed step in the biosynthesis of AMP from IMP. The chain is Adenylosuccinate synthetase, chloroplastic from Zea mays (Maize).